The primary structure comprises 186 residues: Temperature-induced lipocalin-1 (186 aa).

An HPR (Hydrophobic proline-rich) motif is present at residues 90 to 97 (PPFLPIIP). Positions 154 to 174 (KLHKTPQSDTPPESNTAPEDS) are disordered. The segment covering 158–171 (TPQSDTPPESNTAP) has biased composition (polar residues).

The protein belongs to the calycin superfamily. Lipocalin family. In terms of tissue distribution, expressed ubiquitously at similar levels, except in dry seeds (at protein level). Present in seeds.

It localises to the cell membrane. The protein resides in the cytoplasm. The protein localises to the plastid. Its subcellular location is the chloroplast membrane. Its function is as follows. Involved in basal (BT) and acquired thermotolerance (AT), probably by preventing plasma membrane lipids peroxidation induced by severe heat-shock (HS). Lipocalin that confers protection against oxidative stress caused by heat, freezing, paraquat and light. Confers resistance to high salt (NaCl) levels, probably by protecting chloroplasts from ion toxicity via ion homeostasis maintenance. Required for seed longevity by ensuring polyunsaturated lipids integrity. In Arabidopsis thaliana (Mouse-ear cress), this protein is Temperature-induced lipocalin-1.